Consider the following 175-residue polypeptide: Glucagon family neuropeptides (175 aa).

A signal peptide spans 1–23 (MSGNVYKTLLTLLVYGLIMHCNV). A propeptide spanning residues 24–80 (YCSPDRWTPVPGAKLEEEVYDEDGNTLQDFALRAGAPGGGGPRPRWGRCTALYYPPG) is cleaved from the precursor. The tract at residues 149–157 (VKKYLAAVL) is important for receptor binding. Leucine 157 carries the post-translational modification Leucine amide. At lysine 168 the chain carries Lysine amide. Residues 172-175 (VAYL) constitute a propeptide that is removed on maturation.

The protein belongs to the glucagon family.

Its subcellular location is the secreted. Primary role of GRF is to release GH from the pituitary. Its function is as follows. PACAP is a neuropeptide involved in diverse array of physiological processes through activating the PACAP subfamily of class B1 G protein-coupled receptors: VIP receptor 1 (VIPR1), VIP receptor 2 (VIPR2), and PACAP type I receptor (ADCYAP1R1). Exerts neuroprotective and general cytoprotective effects due to anti-apoptotic, anti-inflammatory, and antioxidant actions. Promotes neuron projection development through the RAPGEF2/Rap1/B-Raf/ERK pathway. In chromaffin cells, induces long-lasting increase of intracellular calcium concentrations and neuroendocrine secretion. Involved in the control of glucose homeostasis, induces insulin secretion by pancreatic beta cells. PACAP exists in two bioactive forms from proteolysis of the same precursor protein, PACAP27 and PACAP38, which differ by eleven amino acid residues in the C-terminus. This Gallus gallus (Chicken) protein is Glucagon family neuropeptides (ADCYAP1).